A 492-amino-acid chain; its full sequence is Proline--tRNA ligase (492 aa).

Belongs to the class-II aminoacyl-tRNA synthetase family. ProS type 3 subfamily. Homodimer.

It localises to the cytoplasm. The enzyme catalyses tRNA(Pro) + L-proline + ATP = L-prolyl-tRNA(Pro) + AMP + diphosphate. In terms of biological role, catalyzes the attachment of proline to tRNA(Pro) in a two-step reaction: proline is first activated by ATP to form Pro-AMP and then transferred to the acceptor end of tRNA(Pro). The protein is Proline--tRNA ligase of Christiangramia forsetii (strain DSM 17595 / CGMCC 1.15422 / KT0803) (Gramella forsetii).